Consider the following 931-residue polypeptide: Protocadherin gamma-B2 (931 aa).

The signal sequence occupies residues methionine 1–proline 30. Cadherin domains lie at valine 31–phenylalanine 133, lysine 134–phenylalanine 242, serine 243–valine 347, isoleucine 348–phenylalanine 452, glutamine 453–valine 562, and aspartate 570–leucine 675. Residues valine 31–tyrosine 691 are Extracellular-facing. Asparagine 419 and asparagine 545 each carry an N-linked (GlcNAc...) asparagine glycan. Residues leucine 692–serine 712 form a helical membrane-spanning segment. Topologically, residues leucine 713–lysine 931 are cytoplasmic. Disordered regions lie at residues aspartate 814 to asparagine 840 and alanine 901 to lysine 931. Polar residues predominate over residues tryptophan 815 to asparagine 840. Positions asparagine 921–lysine 931 are enriched in basic residues.

Its subcellular location is the cell membrane. Its function is as follows. Potential calcium-dependent cell-adhesion protein. May be involved in the establishment and maintenance of specific neuronal connections in the brain. The sequence is that of Protocadherin gamma-B2 (PCDHGB2) from Homo sapiens (Human).